Consider the following 237-residue polypeptide: Ribosomal RNA small subunit methyltransferase G (237 aa).

Residues Gly-78, Phe-83, Ala-129 to Glu-130, and Arg-148 each bind S-adenosyl-L-methionine. The disordered stretch occupies residues Lys-218 to Leu-237.

The protein belongs to the methyltransferase superfamily. RNA methyltransferase RsmG family.

The protein localises to the cytoplasm. Its function is as follows. Specifically methylates the N7 position of a guanine in 16S rRNA. The polypeptide is Ribosomal RNA small subunit methyltransferase G (Streptococcus sanguinis (strain SK36)).